We begin with the raw amino-acid sequence, 421 residues long: Serine--tRNA ligase (421 aa).

232-234 (TAE) is an L-serine binding site. 262–264 (RSE) contacts ATP. Glutamate 285 is a binding site for L-serine. 349–352 (EVSS) provides a ligand contact to ATP. Residue serine 384 coordinates L-serine.

The protein belongs to the class-II aminoacyl-tRNA synthetase family. Type-1 seryl-tRNA synthetase subfamily. As to quaternary structure, homodimer. The tRNA molecule binds across the dimer.

The protein resides in the cytoplasm. It catalyses the reaction tRNA(Ser) + L-serine + ATP = L-seryl-tRNA(Ser) + AMP + diphosphate + H(+). The catalysed reaction is tRNA(Sec) + L-serine + ATP = L-seryl-tRNA(Sec) + AMP + diphosphate + H(+). It functions in the pathway aminoacyl-tRNA biosynthesis; selenocysteinyl-tRNA(Sec) biosynthesis; L-seryl-tRNA(Sec) from L-serine and tRNA(Sec): step 1/1. Its function is as follows. Catalyzes the attachment of serine to tRNA(Ser). Is also able to aminoacylate tRNA(Sec) with serine, to form the misacylated tRNA L-seryl-tRNA(Sec), which will be further converted into selenocysteinyl-tRNA(Sec). In Mycoplasma mobile (strain ATCC 43663 / 163K / NCTC 11711) (Mesomycoplasma mobile), this protein is Serine--tRNA ligase.